The following is a 160-amino-acid chain: Transcriptional repressor NrdR (160 aa).

A zinc finger spans residues 3-34; sequence CPFCGAEDTSVVDSRVSEEGSRIRRRRQCTAC. Residues 49–139 form the ATP-cone domain; it reads PQIIKQGGNR…VYRSFEDVGD (91 aa).

Belongs to the NrdR family. It depends on Zn(2+) as a cofactor.

Functionally, negatively regulates transcription of bacterial ribonucleotide reductase nrd genes and operons by binding to NrdR-boxes. This chain is Transcriptional repressor NrdR, found in Nitrosomonas eutropha (strain DSM 101675 / C91 / Nm57).